The chain runs to 564 residues: Septation ring formation regulator EzrA (564 aa).

Residues 1-2 (ME) are Extracellular-facing. The helical transmembrane segment at 3–21 (FVIGLLALFLILFATGYLF) threads the bilayer. The Cytoplasmic segment spans residues 22–564 (RKNIYKEIDR…RLEADAKQPE (543 aa)). Coiled-coil stretches lie at residues 99 to 159 (QKSK…AYSH), 243 to 281 (KGYKLDHIQVEKELENLLKELKRAEDALLDELDLEEAAA), and 310 to 498 (KVPE…VELV).

It belongs to the EzrA family.

Its subcellular location is the cell membrane. Functionally, negative regulator of FtsZ ring formation; modulates the frequency and position of FtsZ ring formation. Inhibits FtsZ ring formation at polar sites. Interacts either with FtsZ or with one of its binding partners to promote depolymerization. The polypeptide is Septation ring formation regulator EzrA (Bacillus licheniformis (strain ATCC 14580 / DSM 13 / JCM 2505 / CCUG 7422 / NBRC 12200 / NCIMB 9375 / NCTC 10341 / NRRL NRS-1264 / Gibson 46)).